The chain runs to 161 residues: DNA-directed RNA polymerase 19 kDa subunit (161 aa).

The span at 1-32 shows a compositional bias: acidic residues; that stretch reads MADTDDIIDYESDDLTEYEDDEEDGESLETSD. A disordered region spans residues 1–35; sequence MADTDDIIDYESDDLTEYEDDEEDGESLETSDIDP.

Belongs to the poxviridae DNA-directed RNA polymerase 19 kDa subunit family. As to quaternary structure, the DNA-dependent RNA polymerase used for intermediate and late genes expression consists of eight subunits Rpo30/OPG66, Rpo7/OPG90, Rpo22/OPG103, Rpo147/OPG105, Rpo18/OPG119, Rpo19/OPG131, Rpo132/OPG151 and Rpo35/OPG156. The same holoenzyme, with the addition of the transcription-specificity factor OPG109, is used for early gene expression.

The protein resides in the virion. It carries out the reaction RNA(n) + a ribonucleoside 5'-triphosphate = RNA(n+1) + diphosphate. Functionally, part of the DNA-dependent RNA polymerase which catalyzes the transcription of viral DNA into RNA using the four ribonucleoside triphosphates as substrates. Responsible for the transcription of early, intermediate and late genes. DNA-dependent RNA polymerase associates with the early transcription factor (ETF), itself composed of OPG118 and OPG133, thereby allowing the early genes transcription. Late transcription, and probably also intermediate transcription, require newly synthesized RNA polymerase. This chain is DNA-directed RNA polymerase 19 kDa subunit (OPG131), found in Monkeypox virus.